Reading from the N-terminus, the 450-residue chain is UDP-N-acetylmuramoylalanine--D-glutamate ligase (450 aa).

119–125 (GSNGKTT) serves as a coordination point for ATP.

It belongs to the MurCDEF family.

The protein localises to the cytoplasm. It carries out the reaction UDP-N-acetyl-alpha-D-muramoyl-L-alanine + D-glutamate + ATP = UDP-N-acetyl-alpha-D-muramoyl-L-alanyl-D-glutamate + ADP + phosphate + H(+). The protein operates within cell wall biogenesis; peptidoglycan biosynthesis. Functionally, cell wall formation. Catalyzes the addition of glutamate to the nucleotide precursor UDP-N-acetylmuramoyl-L-alanine (UMA). The chain is UDP-N-acetylmuramoylalanine--D-glutamate ligase from Streptococcus pneumoniae serotype 19F (strain G54).